Reading from the N-terminus, the 355-residue chain is Oligopeptide transport ATP-binding protein AmiE (355 aa).

Residues Leu-9–Leu-260 form the ABC transporter domain. ATP is bound at residue Gly-45–Ser-52.

Belongs to the ABC transporter superfamily.

Its subcellular location is the cell membrane. Functionally, part of the binding-protein-dependent transport system for oligopeptides. Probably responsible for energy coupling to the transport system. This is Oligopeptide transport ATP-binding protein AmiE (amiE) from Streptococcus pneumoniae serotype 4 (strain ATCC BAA-334 / TIGR4).